Here is an 83-residue protein sequence, read N- to C-terminus: MKASMYLALAGLVLLFVVGYASESEEKEFPRELLSKIFAVDDFKGEERGCKGFGDSCTPGKNECCPNYACSCKHKWCKVYLGK.

A signal peptide spans 1–21 (MKASMYLALAGLVLLFVVGYA). Residues 22-48 (SESEEKEFPRELLSKIFAVDDFKGEER) constitute a propeptide that is removed on maturation. 3 disulfides stabilise this stretch: cysteine 50/cysteine 65, cysteine 57/cysteine 70, and cysteine 64/cysteine 77. At leucine 81 the chain carries Leucine amide.

This sequence belongs to the neurotoxin 10 (Hwtx-1) family. 15 (Hntx-3) subfamily. Monomer. As to expression, expressed by the venom gland.

It localises to the secreted. Its function is as follows. Lethal neurotoxin. Selectively blocks tetrodotoxin-sensitive voltage-gated sodium channels (Nav). Does not affect tetrodotoxin-resistant voltage-gated sodium channels or calcium channels. This Cyriopagopus hainanus (Chinese bird spider) protein is Mu-theraphotoxin-Hhn2p.